A 499-amino-acid polypeptide reads, in one-letter code: Glutamate--tRNA ligase (499 aa).

Positions 10–20 match the 'HIGH' region motif; it reads PSPTGTPHVGM. The 'KMSKS' region motif lies at 255–259; that stretch reads KLSKR. Lysine 258 lines the ATP pocket.

This sequence belongs to the class-I aminoacyl-tRNA synthetase family. Glutamate--tRNA ligase type 1 subfamily. As to quaternary structure, monomer.

The protein resides in the cytoplasm. It carries out the reaction tRNA(Glu) + L-glutamate + ATP = L-glutamyl-tRNA(Glu) + AMP + diphosphate. Catalyzes the attachment of glutamate to tRNA(Glu) in a two-step reaction: glutamate is first activated by ATP to form Glu-AMP and then transferred to the acceptor end of tRNA(Glu). The sequence is that of Glutamate--tRNA ligase from Corynebacterium urealyticum (strain ATCC 43042 / DSM 7109).